A 2671-amino-acid polypeptide reads, in one-letter code: Stalled ribosome sensor GCN1 (2671 aa).

The residue at position 2 (alanine 2) is an N-acetylalanine. HEAT repeat units lie at residues 140–178, 257–293, 294–331, 385–423, 425–459, 460–503, 560–597, 599–636, 697–732, and 733–770; these read NKLV…ENPG, EFKD…LDLS, QYAM…QCSD, IVAE…EVPK, LTEW…GDTL, LQAL…SVAD, NKVQ…SLGG, KLAH…AGKA, DPEA…SLSV, and LSPD…QTPA. Serine 729 bears the Phosphoserine mark. Position 786 is a phosphoserine (serine 786). Residues 804–863 are a coiled coil; sequence QIIELELKEEIKKKKGIKEEVQLTSKQKEMLQAQLDREAQVRRRLQELDGELEAALGLLD. HEAT repeat units follow at residues 879–925, 979–1016, 1035–1072, 1078–1115, 1155–1192, 1210–1250, 1251–1289, 1290–1332, 1335–1372, 1374–1410, 1413–1451, 1455–1492, 1493–1530, 1534–1571, 1573–1609, 1611–1648, 1653–1690, 1692–1729, 1731–1769, 1773–1810, 1812–1848, 1921–1958, 1959–1996, 2001–2038, 2039–2076, 2078–2106, 2107–2146, 2147–2184, 2188–2225, 2259–2296, 2301–2338, 2339–2380, 2382–2417, 2422–2459, 2546–2583, and 2588–2625; these read VLVD…HVTL, SLVF…QAQL, LPRV…SSSG, FAEQ…VLPA, DLQP…RYQR, YRPP…YLDS, SQVK…THGK, ENVN…HLDK, PKVK…AIKE, AGGM…GLGI, LKQQ…MLGK, PYVV…NLSA, HGVK…CAPK, SCLP…VIRN, EILA…HFID, PSLA…LTDQ, PYLP…GMGE, CFED…GLGV, KLEK…TFGD, PYVG…MYAE, AIAL…HISG, EILP…KLGE, KILP…STSR, YFSE…TIGH, QALE…SRVV, PYLV…DALT, RHLG…VEDD, TGHR…RSKA, SHLR…KLDA, KGVT…LTSA, PSVV…AKVG, IALK…IHIK, DPLF…GAGA, VIRK…FLTE, QLPA…DPLP, and QAIK…MRQG. An RWDBD region region spans residues 2260-2408; it reads GVTSILPVLR…GVRDTMLQAL (149 aa). Position 2276 is a phosphoserine (serine 2276). The HEAT 47; degenerate repeat unit spans residues 2627-2661; the sequence is EVFQSLSKILDVASLEVLNEVNRRSLKKLASQADS.

This sequence belongs to the GCN1 family. As to quaternary structure, interacts with EIF2AK4/GCN2; this interaction stimulates the EIF2AK4/GCN2 kinase activity and is impaired by IMPACT upon a variety of stress conditions, such as amino acid depletion, UV-C irradiation, proteasome inhibitor treatment and glucose deprivation. Interacts with IMPACT; this prevents the interaction of GCN1 with EIF2AK4/GCN2 and inhibits EIF2AK4/GCN2 kinase activity. Interacts with RNF14; interaction takes place following ribosome stalling and promotes recruitment of RNF14. Ubiquitously expressed. Expressed in skeletal muscules, ovary and testis.

The protein localises to the cytoplasm. In terms of biological role, ribosome collision sensor that plays a key role in the RNF14-RNF25 translation quality control pathway, a pathway that takes place when a ribosome has stalled during translation, and which promotes ubiquitination and degradation of translation factors on stalled ribosomes. Directly binds to the ribosome and acts as a sentinel for colliding ribosomes: activated following ribosome stalling and promotes recruitment of RNF14, which directly ubiquitinates EEF1A1/eEF1A, leading to its degradation. In addition to EEF1A1/eEF1A, the RNF14-RNF25 translation quality control pathway mediates degradation of ETF1/eRF1 and ubiquitination of ribosomal protein. GCN1 also acts as a positive activator of the integrated stress response (ISR) by mediating activation of EIF2AK4/GCN2 in response to amino acid starvation. Interaction with EIF2AK4/GCN2 on translating ribosomes stimulates EIF2AK4/GCN2 kinase activity, leading to phosphorylation of eukaryotic translation initiation factor 2 (eIF-2-alpha/EIF2S1). EIF2S1/eIF-2-alpha phosphorylation converts EIF2S1/eIF-2-alpha into a global protein synthesis inhibitor, leading to a global attenuation of cap-dependent translation, and thus to a reduced overall utilization of amino acids, while concomitantly initiating the preferential translation of ISR-specific mRNAs, such as the transcriptional activator ATF4, and hence allowing ATF4-mediated reprogramming of amino acid biosynthetic gene expression to alleviate nutrient depletion. This chain is Stalled ribosome sensor GCN1, found in Homo sapiens (Human).